We begin with the raw amino-acid sequence, 305 residues long: Porphobilinogen deaminase (305 aa).

At Cys240 the chain carries S-(dipyrrolylmethanemethyl)cysteine.

The protein belongs to the HMBS family. As to quaternary structure, monomer. Requires dipyrromethane as cofactor.

The enzyme catalyses 4 porphobilinogen + H2O = hydroxymethylbilane + 4 NH4(+). The protein operates within porphyrin-containing compound metabolism; protoporphyrin-IX biosynthesis; coproporphyrinogen-III from 5-aminolevulinate: step 2/4. Tetrapolymerization of the monopyrrole PBG into the hydroxymethylbilane pre-uroporphyrinogen in several discrete steps. The chain is Porphobilinogen deaminase from Xylella fastidiosa (strain M23).